Reading from the N-terminus, the 101-residue chain is Chaperone modulatory protein CbpM (101 aa).

Belongs to the CbpM family.

Interacts with CbpA and inhibits both the DnaJ-like co-chaperone activity and the DNA binding activity of CbpA. Together with CbpA, modulates the activity of the DnaK chaperone system. Does not inhibit the co-chaperone activity of DnaJ. This chain is Chaperone modulatory protein CbpM, found in Pseudomonas putida (strain ATCC 47054 / DSM 6125 / CFBP 8728 / NCIMB 11950 / KT2440).